A 1142-amino-acid polypeptide reads, in one-letter code: Enamelin (1142 aa).

The signal sequence occupies residues 1 to 39; it reads MLVLRCRLGTSFPKLDNLVPKGKMKILLVFLGLLGNSVA. 6 disordered regions span residues 88–193, 214–326, 398–671, 874–955, 1020–1048, and 1062–1092; these read QYQM…ISNE, YYSE…PNIR, PANL…QNRW, CCAG…LRRN, VIGTPDEGSNPEGIQSQVQENESERQQQR, and LAKHHSSTTGTPSSDGRQSPFDGDSITPTEN. Positions 103-114 are enriched in basic residues; the sequence is HPRKSSAPKRHN. Asparagine 114 and asparagine 126 each carry an N-linked (GlcNAc...) asparagine glycan. The segment covering 117 to 128 has biased composition (polar residues); that stretch reads DQTQETQKPNQT. Positions 140–162 are enriched in low complexity; the sequence is KQPSHNQPQPEEEAQPPQAFPPF. The segment covering 170–186 has biased composition (pro residues); it reads QQPPWQIPQRLPPPGYG. Residues serine 191 and serine 216 each carry the phosphoserine modification. Basic and acidic residues predominate over residues 223–234; sequence DFEKPKEEDPPK. Positions 240 to 285 are enriched in polar residues; that stretch reads TEPTANSTVTETNSTQPNPKGSQGGNDTSPTGNSTPGLNTGNNPPA. N-linked (GlcNAc...) asparagine glycosylation is found at asparagine 245, asparagine 252, asparagine 265, and asparagine 296. A compositionally biased stretch (basic and acidic residues) spans 429–442; sequence RNEKIQNPKEKPLG. Composition is skewed to polar residues over residues 452–470, 507–516, and 531–544; these read KNPTSPWRNSQQYEVNKSN, SDGQTQSQNL, and SETNQSELKHSSYQ. The N-linked (GlcNAc...) asparagine glycan is linked to asparagine 467. The N-linked (GlcNAc...) asparagine glycan is linked to asparagine 534. Positions 556–588 are enriched in basic and acidic residues; sequence AKEHFPAGRNTWDHQEISPPFKEDPGRQEEHLP. The span at 652 to 661 shows a compositional bias: acidic residues; that stretch reads NEEDPVDPTG. A compositionally biased stretch (polar residues) spans 924 to 934; that stretch reads SPTSILPGQRN. Asparagine 934 carries N-linked (GlcNAc...) asparagine glycosylation. A compositionally biased stretch (basic and acidic residues) spans 935–951; the sequence is SSEKRESQNPFRDDVST. N-linked (GlcNAc...) asparagine glycosylation occurs at asparagine 1040. The segment covering 1068–1078 has biased composition (polar residues); sequence STTGTPSSDGR.

Phosphorylated by FAM20C in vitro. Expressed in tooth particularly in odontoblast, ameloblast and cementoblast.

It localises to the secreted. It is found in the extracellular space. The protein resides in the extracellular matrix. Functionally, involved in the mineralization and structural organization of enamel. Involved in the extension of enamel during the secretory stage of dental enamel formation. The chain is Enamelin (ENAM) from Homo sapiens (Human).